Here is a 202-residue protein sequence, read N- to C-terminus: Imidazole glycerol phosphate synthase subunit HisH (202 aa).

Residues 3 to 202 enclose the Glutamine amidotransferase type-1 domain; the sequence is RIVILDYGLG…KILKNFVDMC (200 aa). The active-site Nucleophile is C79. Residues H183 and E185 contribute to the active site.

As to quaternary structure, heterodimer of HisH and HisF.

The protein localises to the cytoplasm. It carries out the reaction 5-[(5-phospho-1-deoxy-D-ribulos-1-ylimino)methylamino]-1-(5-phospho-beta-D-ribosyl)imidazole-4-carboxamide + L-glutamine = D-erythro-1-(imidazol-4-yl)glycerol 3-phosphate + 5-amino-1-(5-phospho-beta-D-ribosyl)imidazole-4-carboxamide + L-glutamate + H(+). The catalysed reaction is L-glutamine + H2O = L-glutamate + NH4(+). It participates in amino-acid biosynthesis; L-histidine biosynthesis; L-histidine from 5-phospho-alpha-D-ribose 1-diphosphate: step 5/9. Functionally, IGPS catalyzes the conversion of PRFAR and glutamine to IGP, AICAR and glutamate. The HisH subunit catalyzes the hydrolysis of glutamine to glutamate and ammonia as part of the synthesis of IGP and AICAR. The resulting ammonia molecule is channeled to the active site of HisF. The protein is Imidazole glycerol phosphate synthase subunit HisH of Methanosarcina barkeri (strain Fusaro / DSM 804).